The chain runs to 286 residues: ATP synthase gamma chain (286 aa).

It belongs to the ATPase gamma chain family. F-type ATPases have 2 components, CF(1) - the catalytic core - and CF(0) - the membrane proton channel. CF(1) has five subunits: alpha(3), beta(3), gamma(1), delta(1), epsilon(1). CF(0) has three main subunits: a, b and c.

Its subcellular location is the cell membrane. In terms of biological role, produces ATP from ADP in the presence of a proton gradient across the membrane. The gamma chain is believed to be important in regulating ATPase activity and the flow of protons through the CF(0) complex. The chain is ATP synthase gamma chain from Bacillus anthracis (strain A0248).